The primary structure comprises 850 residues: RPA-related protein RADX (850 aa).

The segment at 1-31 (MSGESGQPQPGPSHAGLYLEHPERDQAGVPG) is disordered. The segment at residues 228-331 (WNSRKNFPAL…LISTMEICLN (104 aa)) is a DNA-binding region (OB). 2 disordered regions span residues 575–612 (EAFW…MGSQ) and 632–671 (GPSA…GKSR). Positions 590-608 (GKEDHCHERGSKRSQDDRP) are enriched in basic and acidic residues. Polar residues predominate over residues 643 to 668 (PHSSAQMKGSKHNTPSQESSTAYTTG).

Its subcellular location is the chromosome. Its function is as follows. Single-stranded DNA-binding protein recruited to replication forks to maintain genome stability. Prevents fork collapse by antagonizing the accumulation of RAD51 at forks to ensure the proper balance of fork remodeling and protection without interfering with the capacity of cells to complete homologous recombination of double-strand breaks. The polypeptide is RPA-related protein RADX (Mus musculus (Mouse)).